Reading from the N-terminus, the 131-residue chain is Aspartate 1-decarboxylase (131 aa).

S25 (schiff-base intermediate with substrate; via pyruvic acid) is an active-site residue. At S25 the chain carries Pyruvic acid (Ser). T57 provides a ligand contact to substrate. Residue Y58 is the Proton donor of the active site. G73–A75 contributes to the substrate binding site.

The protein belongs to the PanD family. Heterooctamer of four alpha and four beta subunits. Pyruvate serves as cofactor. In terms of processing, is synthesized initially as an inactive proenzyme, which is activated by self-cleavage at a specific serine bond to produce a beta-subunit with a hydroxyl group at its C-terminus and an alpha-subunit with a pyruvoyl group at its N-terminus.

The protein localises to the cytoplasm. The catalysed reaction is L-aspartate + H(+) = beta-alanine + CO2. It functions in the pathway cofactor biosynthesis; (R)-pantothenate biosynthesis; beta-alanine from L-aspartate: step 1/1. Functionally, catalyzes the pyruvoyl-dependent decarboxylation of aspartate to produce beta-alanine. This chain is Aspartate 1-decarboxylase, found in Anaeromyxobacter sp. (strain K).